The chain runs to 179 residues: Large ribosomal subunit protein uL10 (179 aa).

It belongs to the universal ribosomal protein uL10 family. In terms of assembly, part of the ribosomal stalk of the 50S ribosomal subunit. The N-terminus interacts with L11 and the large rRNA to form the base of the stalk. The C-terminus forms an elongated spine to which L12 dimers bind in a sequential fashion forming a multimeric L10(L12)X complex.

In terms of biological role, forms part of the ribosomal stalk, playing a central role in the interaction of the ribosome with GTP-bound translation factors. This chain is Large ribosomal subunit protein uL10, found in Thermotoga neapolitana (strain ATCC 49049 / DSM 4359 / NBRC 107923 / NS-E).